Reading from the N-terminus, the 448-residue chain is Mitochondrial distribution and morphology protein 10 (448 aa).

Disordered stretches follow at residues Q101–A126 and P366–E386. Positions N112 to A126 are enriched in basic and acidic residues.

It belongs to the MDM10 family. Component of the ER-mitochondria encounter structure (ERMES) or MDM complex, composed of MMM1, MDM10, MDM12 and MDM34. Associates with the mitochondrial outer membrane sorting assembly machinery SAM(core) complex.

The protein localises to the mitochondrion outer membrane. In terms of biological role, component of the ERMES/MDM complex, which serves as a molecular tether to connect the endoplasmic reticulum and mitochondria. Components of this complex are involved in the control of mitochondrial shape and protein biogenesis and may function in phospholipid exchange. MDM10 is involved in the late assembly steps of the general translocase of the mitochondrial outer membrane (TOM complex). Functions in the TOM40-specific route of the assembly of outer membrane beta-barrel proteins, including the association of TOM40 with the receptor TOM22 and small TOM proteins. Can associate with the SAM(core) complex as well as the MDM12-MMM1 complex, both involved in late steps of the major beta-barrel assembly pathway, that is responsible for biogenesis of all outer membrane beta-barrel proteins. May act as a switch that shuttles between both complexes and channels precursor proteins into the TOM40-specific pathway. Plays a role in mitochondrial morphology and in the inheritance of mitochondria. The chain is Mitochondrial distribution and morphology protein 10 from Coccidioides immitis (strain RS) (Valley fever fungus).